The chain runs to 545 residues: E3 ubiquitin-protein ligase ipaH9.8 (545 aa).

Residues 1–242 form an interaction with target proteins region; that stretch reads MLPINNNFSL…YHGPRIYFSM (242 aa). 8 LRR repeats span residues 57 to 77, 78 to 99, 100 to 117, 118 to 139, 140 to 157, 158 to 179, 182 to 203, and 205 to 228; these read NSDE…NLPA, QITL…PVTL, KKLY…VLPP, ALES…PDSL, LTMN…SLPQ, ALKN…SEGN, VVRE…ILNL, and NECS…QRLT. A linker region spans residues 243-250; the sequence is SDGQQNTL. Positions 251–545 are E3 ubiquitin-protein ligase catalytic domain; it reads HRPLADAVTA…SENGSQLHHS (295 aa). One can recognise an NEL domain in the interval 253-545; it reads PLADAVTAWF…SENGSQLHHS (293 aa). The Glycyl thioester intermediate role is filled by Cys337.

Belongs to the LRR-containing bacterial E3 ligase family. Also interacts with human and mouse U2AF1 (U2AF35). Post-translationally, ubiquitinated in the presence of host E1 ubiquitin-activating enzyme, E2 ubiquitin-conjugating enzyme and ubiquitin.

The protein resides in the secreted. It is found in the host cytoplasm. The protein localises to the host nucleus. It catalyses the reaction S-ubiquitinyl-[E2 ubiquitin-conjugating enzyme]-L-cysteine + [acceptor protein]-L-lysine = [E2 ubiquitin-conjugating enzyme]-L-cysteine + N(6)-ubiquitinyl-[acceptor protein]-L-lysine.. With respect to regulation, exists in an autoinhibited state in the absence of substrate protein, due to interactions of the leucine-rich repeats with NEL domain. Is activated upon binding to a substrate protein. Effector E3 ubiquitin ligase that interferes with host's ubiquitination pathway and modulates the acute inflammatory responses, thus facilitating bacterial colonization within the host cell. Interacts with IKBKG (NEMO) and TNIP1 (ABIN-1), a ubiquitin-binding adapter protein, which results in TNIP1-dependent 'Lys-27'-linked polyubiquitination of IKBKG. Consequently, polyubiquitinated IKBKG undergoes proteasome-dependent degradation, which perturbs NF-kappa-B activation during bacterial infection. Mediates polyubiquitination of host U2AF1, leading to its proteasomal degradation. Catalyzes 'Lys-48'-linked polyubiquitination and subsequent degradation of a subset of host guanylate-binding proteins (GBP1, GBP2, GBP4 and GBP6), thereby suppressing host cell defense. In contrast, host GBP3 and GBP7 are not ubiquitinated by IpaH9.8. Uses UBE2D2 (UBCH5B) as an E2 ubiquitin-conjugating enzyme. The sequence is that of E3 ubiquitin-protein ligase ipaH9.8 (ipaH9.8) from Shigella dysenteriae serotype 1 (strain Sd197).